Consider the following 143-residue polypeptide: Peptide methionine sulfoxide reductase MsrB (143 aa).

In terms of domain architecture, MsrB spans 16–139 (DAELRRRLTP…NSAALNFESR (124 aa)). The Zn(2+) site is built by Cys55, Cys58, Cys104, and Cys107. The active-site Nucleophile is the Cys128.

It belongs to the MsrB Met sulfoxide reductase family. It depends on Zn(2+) as a cofactor.

The catalysed reaction is L-methionyl-[protein] + [thioredoxin]-disulfide + H2O = L-methionyl-(R)-S-oxide-[protein] + [thioredoxin]-dithiol. This is Peptide methionine sulfoxide reductase MsrB from Burkholderia ambifaria (strain MC40-6).